Consider the following 906-residue polypeptide: Patched domain-containing protein 3 (906 aa).

Positions 1 to 70 (MISSKVAPGE…LGQEAPPPRR (70 aa)) are disordered. Residues Asn-148 and Asn-235 are each glycosylated (N-linked (GlcNAc...) asparagine). Helical transmembrane passes span 338 to 358 (TVIP…VVSC), 370 to 390 (VAVF…GLML), 392 to 412 (LGVP…GVGV), 442 to 462 (VAVS…TGIT), 476 to 496 (GTTL…VMAL), 559 to 579 (FIVV…CFQV), 760 to 780 (VMIA…HPVC), 782 to 802 (LWVT…MAFW), 814 to 834 (LVIC…AFVS), 848 to 868 (LYLL…GVCV), and 883 to 903 (IMFL…PVFL). In terms of domain architecture, SSD spans 339–496 (VIPLFHLAYI…ITCFGAVMAL (158 aa)).

Belongs to the patched family. Expressed in germ cells of the testis (at protein level).

It is found in the cell projection. The protein resides in the cilium. The protein localises to the flagellum membrane. It localises to the endoplasmic reticulum membrane. May play a role in sperm development or sperm function. However, does not appear to have an essential role in spermatogenesis or male fertility. This chain is Patched domain-containing protein 3 (Ptchd3), found in Mus musculus (Mouse).